A 315-amino-acid chain; its full sequence is Cytochrome c biogenesis protein CcsA (315 aa).

7 consecutive transmembrane segments (helical) span residues 14–34, 72–92, 101–121, 146–166, 221–241, 255–272, and 282–302; these read VVSL…ISFW, ISNL…AQLF, IVSA…SFVL, VIMC…GVFL, SITA…VWAN, TWAL…HTRL, and AILA…VNLL.

It belongs to the CcmF/CycK/Ccl1/NrfE/CcsA family. May interact with ccs1.

It localises to the cellular thylakoid membrane. Required during biogenesis of c-type cytochromes (cytochrome c6 and cytochrome f) at the step of heme attachment. The chain is Cytochrome c biogenesis protein CcsA from Prochlorococcus marinus (strain NATL1A).